The sequence spans 373 residues: MSSIKFHEKSLKEVTRWIQANEDINTETSLSSSSDSSTTIPVIDHLPARIPYATDLKRNPCHFQKCLISRLATTKMLSHAVDGGDIEVMGMLVGYTSNDMIVVKDCYSLPVQGTETRVNAHMESYEYMVQYLDAFVTKEDKIVGWYHSHPGYGCWLSNIDIQTQSLNQNYQDPYLAIVVDPKKSLSGNTLDIGAFRTLPSKDNNEHVDYYPLNIQLYQNSLDVNISKLKLKFKVDPAIQNNPNEPELMKELHECVENWFHAKKVMKSTVGFNAIGSTVVNETEIGNEDFTHERSNSISSTSSLTTRHTTDVEMDDQESAQSSLDIPANVIPGMQFQEAEIKHEYELKKKKLLLLKVKQYQKLRTYRQLFNASE.

One can recognise an MPN domain in the interval 66–201 (CLISRLATTK…IGAFRTLPSK (136 aa)). Zn(2+)-binding residues include H147, H149, and D160. The short motif at 147 to 160 (HSHPGYGCWLSNID) is the JAMM motif element. A disordered region spans residues 289–325 (FTHERSNSISSTSSLTTRHTTDVEMDDQESAQSSLDI). Residues 295–306 (NSISSTSSLTTR) show a composition bias toward low complexity.

It belongs to the peptidase M67A family. CSN5 subfamily. As to quaternary structure, component of the COP9 signalosome (CSN) complex.

It is found in the cytoplasm. It localises to the nucleus. Its function is as follows. Catalytic Component of the COP9 signalosome (CSN) complex that acts as an regulator of the ubiquitin (Ubl) conjugation pathway by mediating the deneddylation of the cullin subunit of SCF-type E3 ubiquitin-protein ligase complexes. The CNS complex is involved in the regulation of the mating pheromone response. The sequence is that of COP9 signalosome complex subunit 5 (RRI1) from Kluyveromyces lactis (strain ATCC 8585 / CBS 2359 / DSM 70799 / NBRC 1267 / NRRL Y-1140 / WM37) (Yeast).